A 113-amino-acid polypeptide reads, in one-letter code: MHEMSIAMSVIDAVTEKARQEGCSKVTGIELVVGHLSGVEVESLKFCFSAACRDTPADGAELVIEECEAVGRCEACGETFPITSFYAKCPSCAQFRVQIESGQELSVRSITIE.

His2 serves as a coordination point for Ni(2+). Zn(2+)-binding residues include Cys73, Cys76, Cys89, and Cys92.

It belongs to the HypA/HybF family.

Involved in the maturation of [NiFe] hydrogenases. Required for nickel insertion into the metal center of the hydrogenase. In Chlorobaculum parvum (strain DSM 263 / NCIMB 8327) (Chlorobium vibrioforme subsp. thiosulfatophilum), this protein is Hydrogenase maturation factor HypA.